Consider the following 276-residue polypeptide: Large ribosomal subunit protein uL2c (276 aa).

Residues 225 to 276 (AMNPVDHPHGGGEGRTPIGRKKPVTPWGYSALGKKSRKRNRYSDASILRRRE) are disordered.

It belongs to the universal ribosomal protein uL2 family. Part of the 50S ribosomal subunit.

It is found in the plastid. Its subcellular location is the chloroplast. This chain is Large ribosomal subunit protein uL2c (rpl2), found in Pinus thunbergii (Japanese black pine).